Reading from the N-terminus, the 152-residue chain is Transcriptional regulator MraZ (152 aa).

SpoVT-AbrB domains follow at residues Ala-5–Glu-52 and Ala-81–Ser-124.

Belongs to the MraZ family. Forms oligomers.

The protein resides in the cytoplasm. It is found in the nucleoid. The polypeptide is Transcriptional regulator MraZ (Shewanella baltica (strain OS223)).